The primary structure comprises 372 residues: Sulfate/thiosulfate import ATP-binding protein CysA (372 aa).

An ABC transporter domain is found at 3–237 (IQVQHVTKRF…PATPFVYGFL (235 aa)). An ATP-binding site is contributed by 35–42 (GPSGCGKT).

It belongs to the ABC transporter superfamily. Sulfate/tungstate importer (TC 3.A.1.6) family. In terms of assembly, the complex is composed of two ATP-binding proteins (CysA), two transmembrane proteins (CysT and CysW) and a solute-binding protein (CysP).

The protein localises to the cell inner membrane. It catalyses the reaction sulfate(out) + ATP + H2O = sulfate(in) + ADP + phosphate + H(+). The catalysed reaction is thiosulfate(out) + ATP + H2O = thiosulfate(in) + ADP + phosphate + H(+). Part of the ABC transporter complex CysAWTP involved in sulfate/thiosulfate import. Responsible for energy coupling to the transport system. The protein is Sulfate/thiosulfate import ATP-binding protein CysA of Ralstonia nicotianae (strain ATCC BAA-1114 / GMI1000) (Ralstonia solanacearum).